Here is an 876-residue protein sequence, read N- to C-terminus: Alanine--tRNA ligase (876 aa).

Lysine 74 is subject to N6-acetyllysine. Residues histidine 564, histidine 568, cysteine 666, and histidine 670 each coordinate Zn(2+).

This sequence belongs to the class-II aminoacyl-tRNA synthetase family. Homotetramer. It depends on Zn(2+) as a cofactor.

It localises to the cytoplasm. The catalysed reaction is tRNA(Ala) + L-alanine + ATP = L-alanyl-tRNA(Ala) + AMP + diphosphate. Catalyzes the attachment of alanine to tRNA(Ala) in a two-step reaction: alanine is first activated by ATP to form Ala-AMP and then transferred to the acceptor end of tRNA(Ala). Also edits incorrectly charged Ser-tRNA(Ala) and Gly-tRNA(Ala) via its editing domain. This Shigella dysenteriae serotype 1 (strain Sd197) protein is Alanine--tRNA ligase.